Here is a 149-residue protein sequence, read N- to C-terminus: Inner membrane protein YdcZ (149 aa).

Residues 1–4 (MNQS) lie on the Periplasmic side of the membrane. A helical membrane pass occupies residues 5–25 (LTLAFLIAAGIGLVVQNTLMV). At 26–33 (RITQTSST) the chain is on the cytoplasmic side. A helical membrane pass occupies residues 34 to 54 (ILIAMLLNSLVGIVLFVSILW). Residues 55–70 (FKQGMAGFGELVSSVR) are Periplasmic-facing. The chain crosses the membrane as a helical span at residues 71 to 91 (WWTLIPGLLGSFFVFASISGY). Topologically, residues 92–93 (QN) are cytoplasmic. The helical transmembrane segment at 94-114 (VGAATTIAVLVASQLIGGLML) threads the bilayer. Over 115–123 (DIFRSHGVP) the chain is Periplasmic. The helical transmembrane segment at 124–144 (LRALFGPICGAILLVVGAWLV) threads the bilayer. Over 145–149 (ARRSF) the chain is Cytoplasmic.

The protein resides in the cell inner membrane. The protein is Inner membrane protein YdcZ (ydcZ) of Escherichia coli (strain K12).